Reading from the N-terminus, the 239-residue chain is Ribosomal RNA large subunit methyltransferase E (239 aa).

The tract at residues 1 to 20 (MTKAPIAGNRTGRKLGQRVK) is disordered. Positions 11 to 20 (TGRKLGQRVK) are enriched in basic residues. S-adenosyl-L-methionine contacts are provided by glycine 81, tryptophan 83, aspartate 104, aspartate 120, and aspartate 144. Lysine 184 functions as the Proton acceptor in the catalytic mechanism.

It belongs to the class I-like SAM-binding methyltransferase superfamily. RNA methyltransferase RlmE family.

The protein resides in the cytoplasm. The enzyme catalyses uridine(2552) in 23S rRNA + S-adenosyl-L-methionine = 2'-O-methyluridine(2552) in 23S rRNA + S-adenosyl-L-homocysteine + H(+). Its function is as follows. Specifically methylates the uridine in position 2552 of 23S rRNA at the 2'-O position of the ribose in the fully assembled 50S ribosomal subunit. This chain is Ribosomal RNA large subunit methyltransferase E, found in Rhizobium johnstonii (strain DSM 114642 / LMG 32736 / 3841) (Rhizobium leguminosarum bv. viciae).